The primary structure comprises 256 residues: Triosephosphate isomerase (256 aa).

Position 9-11 (9-11) interacts with substrate; it reads NWK. The active-site Electrophile is histidine 94. The Proton acceptor role is filled by glutamate 166. Substrate is bound by residues glycine 172, serine 211, and 232-233; that span reads GG.

Belongs to the triosephosphate isomerase family. Homodimer.

It is found in the cytoplasm. The catalysed reaction is D-glyceraldehyde 3-phosphate = dihydroxyacetone phosphate. It functions in the pathway carbohydrate biosynthesis; gluconeogenesis. It participates in carbohydrate degradation; glycolysis; D-glyceraldehyde 3-phosphate from glycerone phosphate: step 1/1. Its function is as follows. Involved in the gluconeogenesis. Catalyzes stereospecifically the conversion of dihydroxyacetone phosphate (DHAP) to D-glyceraldehyde-3-phosphate (G3P). The sequence is that of Triosephosphate isomerase from Natranaerobius thermophilus (strain ATCC BAA-1301 / DSM 18059 / JW/NM-WN-LF).